The sequence spans 127 residues: Small ribosomal subunit protein bS6 (127 aa).

Residues 102 to 127 are disordered; that stretch reads IMQGAEKGKSSRKEKVDAEAEASEEA. Residues 107–119 show a composition bias toward basic and acidic residues; sequence EKGKSSRKEKVDA.

The protein belongs to the bacterial ribosomal protein bS6 family.

Its function is as follows. Binds together with bS18 to 16S ribosomal RNA. The sequence is that of Small ribosomal subunit protein bS6 from Coxiella burnetii (strain CbuK_Q154) (Coxiella burnetii (strain Q154)).